The primary structure comprises 144 residues: Large ribosomal subunit protein uL15 (144 aa).

The disordered stretch occupies residues 1–48 (MQLNNLKPADGSKHAKRRVGRGIGSGLGKTAGRGHKGQKSRSGGFHKV). Over residues 21–31 (RGIGSGLGKTA) the composition is skewed to gly residues.

It belongs to the universal ribosomal protein uL15 family. In terms of assembly, part of the 50S ribosomal subunit.

Binds to the 23S rRNA. The polypeptide is Large ribosomal subunit protein uL15 (Cupriavidus metallidurans (strain ATCC 43123 / DSM 2839 / NBRC 102507 / CH34) (Ralstonia metallidurans)).